A 381-amino-acid chain; its full sequence is E3 ubiquitin-protein ligase ATL15 (381 aa).

A signal peptide spans 1–23 (MVVMSRVSFYSSFLLLLLEVVVA). Residues 40-60 (AIIMIVLVSVFFALGCISVYM) form a helical membrane-spanning segment. Residues 118-160 (CPVCLNEFEDDETLRLIPQCCHVFHPGCIDAWLRSQTTCPLCR) form an RING-type; atypical zinc finger.

The protein belongs to the RING-type zinc finger family. ATL subfamily.

It is found in the membrane. The enzyme catalyses S-ubiquitinyl-[E2 ubiquitin-conjugating enzyme]-L-cysteine + [acceptor protein]-L-lysine = [E2 ubiquitin-conjugating enzyme]-L-cysteine + N(6)-ubiquitinyl-[acceptor protein]-L-lysine.. The protein operates within protein modification; protein ubiquitination. E3 ubiquitin-protein ligase able to catalyze polyubiquitination with ubiquitin-conjugating enzyme E2 UBC8, UBC10, UBC11, UBC28 and UBC29 in vitro. This chain is E3 ubiquitin-protein ligase ATL15 (ATL15), found in Arabidopsis thaliana (Mouse-ear cress).